The chain runs to 287 residues: ATP synthase gamma chain (287 aa).

This sequence belongs to the ATPase gamma chain family. In terms of assembly, F-type ATPases have 2 components, CF(1) - the catalytic core - and CF(0) - the membrane proton channel. CF(1) has five subunits: alpha(3), beta(3), gamma(1), delta(1), epsilon(1). CF(0) has three main subunits: a, b and c.

It is found in the cell inner membrane. Produces ATP from ADP in the presence of a proton gradient across the membrane. The gamma chain is believed to be important in regulating ATPase activity and the flow of protons through the CF(0) complex. The chain is ATP synthase gamma chain from Edwardsiella ictaluri (strain 93-146).